The following is a 460-amino-acid chain: UDP-glycosyltransferase 74B1 (460 aa).

His22 acts as the Proton acceptor in catalysis. His22 contributes to the an anthocyanidin binding site. The Charge relay role is filled by Asp113. UDP-alpha-D-glucose is bound by residues Thr135, Gln339, His354, Trp357, Asn358, Ser359, Glu362, Asp378, and Gln379.

The protein belongs to the UDP-glycosyltransferase family. As to expression, expressed in the vasculature, the apical meristems of roots, shoots and inflorescence, and the junction of organ or branches.

It catalyses the reaction (Z)-2-phenyl-1-thioacetohydroximate + UDP-alpha-D-glucose = (Z)-desulfoglucotropeolin + UDP. It carries out the reaction a (Z)-omega-(methylsulfanyl)alkyl-thiohydroximate + UDP-alpha-D-glucose = an aliphatic (Z)-desulfo-glucosinolate + UDP. The catalysed reaction is (Z)-2-(indol-3-yl)-1-thioacetohydroximate + UDP-alpha-D-glucose = (Z)-indolylmethyl desulfoglucosinolate + UDP. Functionally, involved in the biosynthesis of glucosinolate. In in vitro assay, may use phenylacetothiohydroximate (PATH), but not phenylacetic acid (PAA), indole-3-acetic acid (IAA) or salicylic acid (SA) as substrate. Specific for the thiohydroximate functional group and does not glucosylate the carboxylate group or a hydroxyl group. The protein is UDP-glycosyltransferase 74B1 (UGT74B1) of Arabidopsis thaliana (Mouse-ear cress).